The following is a 414-amino-acid chain: FAD-dependent monooxygenase adaC (414 aa).

FAD contacts are provided by Glu-32, Ala-43, Arg-115, Asp-325, and Gly-338.

The protein belongs to the paxM FAD-dependent monooxygenase family. The cofactor is FAD.

The catalysed reaction is 3-(2,4-dioxopentyl)-3,6,8,9-tetrahydroxy-1-oxo-1,2,3,4-tetrahydroanthracene-2-carboxyl-[ACP] + NADPH + O2 + H(+) = 3-(2,4-dioxopentyl)-2,3,6,8,9-pentahydroxy-1-oxo-1,2,3,4-tetrahydroanthracene-2-carboxyl-[ACP] + NADP(+) + H2O. It participates in secondary metabolite biosynthesis. Functionally, FAD-dependent monooxygenase; part of the gene cluster that mediates the biosynthesis of the linear tetracyclic TAN-1612 neuropeptide Y receptor antagonist. The decaketide backbone of TAN-1612 is synthesized by the non-reducing polyketide synthase adaA via condensation of one acetyl-CoA starter unit with 9 malonyl-CoA units. The FAD-dependent monooxygenase adaC then performs hydroxylation at C2 while the polaketide chain is still attached to the NRPKS adaA. The alpha-hydroxylation step at C2 appears to be crucial for the following C18-C1 Claisen cyclization and release of the C9-hydroxyl version of TAN-1612 from the NRPKS adaA, two steps performed by the lactamase-like protein adaB. Finally, the O-methyltransferase adaD performs the C9 O-methylation to complete the biosynthesis of TAN-1612. The chain is FAD-dependent monooxygenase adaC from Aspergillus niger (strain ATCC MYA-4892 / CBS 513.88 / FGSC A1513).